The sequence spans 215 residues: MQIQTILLCFSFSFSAAFYFHAGEREEKCIIEDIPSDTLITGTFKVQQWDIVRHDFLESAPGLGMFVTVTTYNDEVLLSKLYGAQGTFYFTSHSSGEHIICLESNSTQFVSFGGSKLRIHLDIRVGEHDLDAAIVQAKDKVNEVTFKLQHLIEQVEQILKEQDYQRDREENFRITSEDTNRNVLWWAFAQILIFISVGIFQMKHLKDFFIAKKLV.

A signal peptide spans 1–17 (MQIQTILLCFSFSFSAA). Over 18 to 167 (FYFHAGEREE…ILKEQDYQRD (150 aa)) the chain is Lumenal. Positions 27-125 (EKCIIEDIPS…KLRIHLDIRV (99 aa)) constitute a GOLD domain. A glycan (N-linked (GlcNAc...) asparagine) is linked at asparagine 105. Residues 136 to 171 (QAKDKVNEVTFKLQHLIEQVEQILKEQDYQRDREEN) are a coiled coil. A helical transmembrane segment spans residues 168–185 (REENFRITSEDTNRNVLW). The Cytoplasmic portion of the chain corresponds to 186 to 215 (WAFAQILIFISVGIFQMKHLKDFFIAKKLV). The COPII vesicle coat-binding signature appears at 208-209 (FF). A COPI vesicle coat-binding motif is present at residues 208-215 (FFIAKKLV).

This sequence belongs to the EMP24/GP25L family.

The protein resides in the endoplasmic reticulum membrane. In terms of biological role, part of a complex whose function is to bind Ca(2+) to the ER membrane and thereby regulate the retention of ER resident proteins. This chain is Transmembrane emp24 domain-containing protein 11 (Tmed11), found in Mus musculus (Mouse).